The chain runs to 218 residues: Ribose-5-phosphate isomerase A (218 aa).

Substrate-binding positions include 28–31 (TGST), 81–84 (DGAD), and 94–97 (KGGG). The Proton acceptor role is filled by Glu103. A substrate-binding site is contributed by Lys121.

It belongs to the ribose 5-phosphate isomerase family. As to quaternary structure, homodimer.

It catalyses the reaction aldehydo-D-ribose 5-phosphate = D-ribulose 5-phosphate. Its pathway is carbohydrate degradation; pentose phosphate pathway; D-ribose 5-phosphate from D-ribulose 5-phosphate (non-oxidative stage): step 1/1. Functionally, catalyzes the reversible conversion of ribose-5-phosphate to ribulose 5-phosphate. This Colwellia psychrerythraea (strain 34H / ATCC BAA-681) (Vibrio psychroerythus) protein is Ribose-5-phosphate isomerase A.